Here is a 334-residue protein sequence, read N- to C-terminus: L-lactate dehydrogenase B chain (334 aa).

An N-acetylalanine modification is found at Ala-2. Lys-7 carries the post-translational modification N6-acetyllysine. Phosphoserine occurs at positions 11 and 44. NAD(+) is bound by residues 30–58 and Arg-100; that span reads GQVG…LEDK. N6-acetyllysine is present on Lys-58. Arg-107 is a substrate binding site. Lys-119 carries the post-translational modification N6-acetyllysine. Asn-139 lines the NAD(+) pocket. Substrate is bound by residues Asn-139 and Arg-170. Residue His-194 is the Proton acceptor of the active site. Phosphotyrosine is present on Tyr-240. Position 249 (Thr-249) interacts with substrate. Lys-329 is modified (N6-acetyllysine).

This sequence belongs to the LDH/MDH superfamily. LDH family. As to quaternary structure, homotetramer. Interacts with PTEN upstream reading frame protein MP31; the interaction leads to inhibition of mitochondrial lactate dehydrogenase activity, preventing conversion of lactate to pyruvate in mitochondria.

The protein resides in the cytoplasm. It localises to the mitochondrion inner membrane. The catalysed reaction is (S)-lactate + NAD(+) = pyruvate + NADH + H(+). It participates in fermentation; pyruvate fermentation to lactate; (S)-lactate from pyruvate: step 1/1. In terms of biological role, interconverts simultaneously and stereospecifically pyruvate and lactate with concomitant interconversion of NADH and NAD(+). This is L-lactate dehydrogenase B chain (Ldhb) from Mus musculus (Mouse).